Consider the following 429-residue polypeptide: Enolase (429 aa).

Residue Q163 participates in (2R)-2-phosphoglycerate binding. E205 acts as the Proton donor in catalysis. Positions 242, 286, and 313 each coordinate Mg(2+). (2R)-2-phosphoglycerate contacts are provided by K338, R367, S368, and K389. The Proton acceptor role is filled by K338.

The protein belongs to the enolase family. Requires Mg(2+) as cofactor.

It is found in the cytoplasm. It localises to the secreted. The protein localises to the cell surface. The enzyme catalyses (2R)-2-phosphoglycerate = phosphoenolpyruvate + H2O. It participates in carbohydrate degradation; glycolysis; pyruvate from D-glyceraldehyde 3-phosphate: step 4/5. In terms of biological role, catalyzes the reversible conversion of 2-phosphoglycerate (2-PG) into phosphoenolpyruvate (PEP). It is essential for the degradation of carbohydrates via glycolysis. The polypeptide is Enolase (Thermoanaerobacter pseudethanolicus (strain ATCC 33223 / 39E) (Clostridium thermohydrosulfuricum)).